The primary structure comprises 91 residues: Large ribosomal subunit protein eL37B (91 aa).

The Zn(2+) site is built by Cys-19, Cys-22, Cys-34, and Cys-37. The C4-type zinc finger occupies 19–37; the sequence is CRRCGKRSFHIQKSTCACC.

The protein belongs to the eukaryotic ribosomal protein eL37 family. In terms of assembly, component of the large ribosomal subunit (LSU). Mature yeast ribosomes consist of a small (40S) and a large (60S) subunit. The 40S small subunit contains 1 molecule of ribosomal RNA (18S rRNA) and at least 33 different proteins. The large 60S subunit contains 3 rRNA molecules (25S, 5.8S and 5S rRNA) and at least 46 different proteins. The cofactor is Zn(2+).

Its subcellular location is the cytoplasm. In terms of biological role, component of the ribosome, a large ribonucleoprotein complex responsible for the synthesis of proteins in the cell. The small ribosomal subunit (SSU) binds messenger RNAs (mRNAs) and translates the encoded message by selecting cognate aminoacyl-transfer RNA (tRNA) molecules. The large subunit (LSU) contains the ribosomal catalytic site termed the peptidyl transferase center (PTC), which catalyzes the formation of peptide bonds, thereby polymerizing the amino acids delivered by tRNAs into a polypeptide chain. The nascent polypeptides leave the ribosome through a tunnel in the LSU and interact with protein factors that function in enzymatic processing, targeting, and the membrane insertion of nascent chains at the exit of the ribosomal tunnel. This Schizosaccharomyces pombe (strain 972 / ATCC 24843) (Fission yeast) protein is Large ribosomal subunit protein eL37B (rpl3702).